The following is a 374-amino-acid chain: PqqA peptide cyclase (374 aa).

The Radical SAM core domain maps to V13–L230. Residues C27, C31, and C34 each contribute to the [4Fe-4S] cluster site.

It belongs to the radical SAM superfamily. PqqE family. As to quaternary structure, interacts with PqqD. The interaction is necessary for activity of PqqE. [4Fe-4S] cluster serves as cofactor.

The enzyme catalyses [PQQ precursor protein] + S-adenosyl-L-methionine = E-Y cross-linked-[PQQ precursor protein] + 5'-deoxyadenosine + L-methionine + H(+). It functions in the pathway cofactor biosynthesis; pyrroloquinoline quinone biosynthesis. Functionally, catalyzes the cross-linking of a glutamate residue and a tyrosine residue in the PqqA protein as part of the biosynthesis of pyrroloquinoline quinone (PQQ). This chain is PqqA peptide cyclase, found in Ruegeria pomeroyi (strain ATCC 700808 / DSM 15171 / DSS-3) (Silicibacter pomeroyi).